A 179-amino-acid polypeptide reads, in one-letter code: Probable phosphopantothenoylcysteine decarboxylase (179 aa).

Asparagine 124 contacts substrate. Cysteine 157 serves as the catalytic Proton donor.

This sequence belongs to the HFCD (homooligomeric flavin containing Cys decarboxylase) superfamily. It depends on FMN as a cofactor.

It carries out the reaction N-[(R)-4-phosphopantothenoyl]-L-cysteine + H(+) = (R)-4'-phosphopantetheine + CO2. Its pathway is cofactor biosynthesis; coenzyme A biosynthesis; CoA from (R)-pantothenate: step 3/5. In terms of biological role, catalyzes the decarboxylation of 4'-phosphopantothenoylcysteine to 4'-phosphopantetheine. The polypeptide is Probable phosphopantothenoylcysteine decarboxylase (coaC) (Streptococcus mutans serotype c (strain ATCC 700610 / UA159)).